Here is a 429-residue protein sequence, read N- to C-terminus: 3-phosphoshikimate 1-carboxyvinyltransferase (429 aa).

Lys-22, Ser-23, and Arg-27 together coordinate 3-phosphoshikimate. Residue Lys-22 participates in phosphoenolpyruvate binding. Phosphoenolpyruvate contacts are provided by Gly-94 and Arg-122. 3-phosphoshikimate-binding residues include Ser-167, Gln-169, Asp-315, and Lys-342. Gln-169 provides a ligand contact to phosphoenolpyruvate. The active-site Proton acceptor is Asp-315. 2 residues coordinate phosphoenolpyruvate: Arg-346 and Arg-388.

The protein belongs to the EPSP synthase family. Monomer.

It localises to the cytoplasm. It carries out the reaction 3-phosphoshikimate + phosphoenolpyruvate = 5-O-(1-carboxyvinyl)-3-phosphoshikimate + phosphate. The protein operates within metabolic intermediate biosynthesis; chorismate biosynthesis; chorismate from D-erythrose 4-phosphate and phosphoenolpyruvate: step 6/7. Catalyzes the transfer of the enolpyruvyl moiety of phosphoenolpyruvate (PEP) to the 5-hydroxyl of shikimate-3-phosphate (S3P) to produce enolpyruvyl shikimate-3-phosphate and inorganic phosphate. In Geobacter metallireducens (strain ATCC 53774 / DSM 7210 / GS-15), this protein is 3-phosphoshikimate 1-carboxyvinyltransferase.